The chain runs to 577 residues: 2-succinyl-5-enolpyruvyl-6-hydroxy-3-cyclohexene-1-carboxylate synthase (577 aa).

It belongs to the TPP enzyme family. MenD subfamily. Homodimer. Mg(2+) is required as a cofactor. Mn(2+) serves as cofactor. The cofactor is thiamine diphosphate.

It catalyses the reaction isochorismate + 2-oxoglutarate + H(+) = 5-enolpyruvoyl-6-hydroxy-2-succinyl-cyclohex-3-ene-1-carboxylate + CO2. Its pathway is quinol/quinone metabolism; 1,4-dihydroxy-2-naphthoate biosynthesis; 1,4-dihydroxy-2-naphthoate from chorismate: step 2/7. It functions in the pathway quinol/quinone metabolism; menaquinone biosynthesis. Its function is as follows. Catalyzes the thiamine diphosphate-dependent decarboxylation of 2-oxoglutarate and the subsequent addition of the resulting succinic semialdehyde-thiamine pyrophosphate anion to isochorismate to yield 2-succinyl-5-enolpyruvyl-6-hydroxy-3-cyclohexene-1-carboxylate (SEPHCHC). In Porphyromonas gingivalis (strain ATCC BAA-308 / W83), this protein is 2-succinyl-5-enolpyruvyl-6-hydroxy-3-cyclohexene-1-carboxylate synthase.